The chain runs to 98 residues: DNA-binding protein Fis (98 aa).

A DNA-binding region (H-T-H motif) is located at residues 74 to 93; sequence QTRAALMMGINRGTLRKKLK.

This sequence belongs to the transcriptional regulatory Fis family. As to quaternary structure, homodimer.

Activates ribosomal RNA transcription. Plays a direct role in upstream activation of rRNA promoters. The protein is DNA-binding protein Fis of Photorhabdus laumondii subsp. laumondii (strain DSM 15139 / CIP 105565 / TT01) (Photorhabdus luminescens subsp. laumondii).